We begin with the raw amino-acid sequence, 445 residues long: NAD-specific glutamate dehydrogenase (445 aa).

Lys-124 is a catalytic residue.

This sequence belongs to the Glu/Leu/Phe/Val dehydrogenases family. As to quaternary structure, homohexamer.

It is found in the cell surface. It catalyses the reaction L-glutamate + NAD(+) + H2O = 2-oxoglutarate + NH4(+) + NADH + H(+). Functionally, probably involved in degradation rather than biosynthesis of glutamate. This is NAD-specific glutamate dehydrogenase (gdh) from Porphyromonas gingivalis (strain ATCC 33277 / DSM 20709 / CIP 103683 / JCM 12257 / NCTC 11834 / 2561).